Consider the following 72-residue polypeptide: ATP synthase subunit c (72 aa).

2 helical membrane passes run 1-21 and 49-69; these read MSLGVIAAAIAIGLSALGAGI and FIGVALVEALPIIGVVIAFIV.

This sequence belongs to the ATPase C chain family. In terms of assembly, F-type ATPases have 2 components, F(1) - the catalytic core - and F(0) - the membrane proton channel. F(1) has five subunits: alpha(3), beta(3), gamma(1), delta(1), epsilon(1). F(0) has three main subunits: a(1), b(2) and c(10-14). The alpha and beta chains form an alternating ring which encloses part of the gamma chain. F(1) is attached to F(0) by a central stalk formed by the gamma and epsilon chains, while a peripheral stalk is formed by the delta and b chains.

It is found in the cell membrane. In terms of biological role, f(1)F(0) ATP synthase produces ATP from ADP in the presence of a proton or sodium gradient. F-type ATPases consist of two structural domains, F(1) containing the extramembraneous catalytic core and F(0) containing the membrane proton channel, linked together by a central stalk and a peripheral stalk. During catalysis, ATP synthesis in the catalytic domain of F(1) is coupled via a rotary mechanism of the central stalk subunits to proton translocation. Functionally, key component of the F(0) channel; it plays a direct role in translocation across the membrane. A homomeric c-ring of between 10-14 subunits forms the central stalk rotor element with the F(1) delta and epsilon subunits. The chain is ATP synthase subunit c from Bacillus cytotoxicus (strain DSM 22905 / CIP 110041 / 391-98 / NVH 391-98).